The chain runs to 234 residues: Putative lipoyltransferase 2, mitochondrial (234 aa).

The transit peptide at 1–28 (MPFVRPLVTVVRAGRHSYSAGLQLQQRL) directs the protein to the mitochondrion. The 182-residue stretch at 39-220 (AEFRNYLVLQ…SFAKVFECRL (182 aa)) folds into the BPL/LPL catalytic domain. Residues 83–90 (RGGLITFH), 150–152 (AIG), and 163–165 (GIG) each bind substrate. Cys-181 acts as the Acyl-thioester intermediate in catalysis.

This sequence belongs to the LipB family.

It is found in the mitochondrion. It carries out the reaction octanoyl-[ACP] + L-lysyl-[protein] = N(6)-octanoyl-L-lysyl-[protein] + holo-[ACP] + H(+). The protein operates within protein modification; protein lipoylation via endogenous pathway; protein N(6)-(lipoyl)lysine from octanoyl-[acyl-carrier-protein]: step 1/2. Catalyzes the transfer of endogenously produced octanoic acid from octanoyl-acyl-carrier-protein onto the lipoyl domains of lipoate-dependent enzymes. Lipoyl-ACP can also act as a substrate although octanoyl-ACP is likely to be the physiological substrate. The protein is Putative lipoyltransferase 2, mitochondrial of Drosophila melanogaster (Fruit fly).